The sequence spans 29 residues: Trypsin inhibitor 3 (29 aa).

Disulfide bonds link cysteine 3–cysteine 20, cysteine 10–cysteine 22, and cysteine 16–cysteine 28.

It belongs to the protease inhibitor I7 (squash-type serine protease inhibitor) family.

Its subcellular location is the secreted. Inhibits trypsin. This is Trypsin inhibitor 3 from Luffa aegyptiaca (Sponge gourd).